We begin with the raw amino-acid sequence, 340 residues long: Ferrochelatase (340 aa).

H189 and E292 together coordinate Fe cation.

This sequence belongs to the ferrochelatase family.

The protein localises to the cytoplasm. The catalysed reaction is heme b + 2 H(+) = protoporphyrin IX + Fe(2+). It participates in porphyrin-containing compound metabolism; protoheme biosynthesis; protoheme from protoporphyrin-IX: step 1/1. Catalyzes the ferrous insertion into protoporphyrin IX. The polypeptide is Ferrochelatase (Pseudomonas aeruginosa (strain UCBPP-PA14)).